The chain runs to 559 residues: Regulatory protein PHO2 (559 aa).

Disordered regions lie at residues 16-88 (ATDL…KGEA), 132-158 (LRKK…DYDR), 293-333 (INSN…AKDN), and 534-559 (PTDS…HRWI). Low complexity-rich tracts occupy residues 24–52 (HDQQ…IQTQ) and 63–74 (NDMSASSNASDS). The segment at residues 77 to 136 (QRPKRTRAKGEALDVLKRKFEINPTPSLVERKKISDLIGMPEKNVRIWFQNRRAKLRKKQ) is a DNA-binding region (homeobox). Polar residues predominate over residues 141-151 (KDTIPSSQSRD). Residues 293–307 (INSNNTSDKNNSNTN) show a composition bias toward low complexity. A compositionally biased stretch (acidic residues) spans 308 to 323 (NDDDNDDNSNEDNDNS). Basic and acidic residues predominate over residues 324–333 (SEDKRNAKDN). Thr-542 is subject to Phosphothreonine.

The protein resides in the nucleus. Its function is as follows. Regulator in phosphate metabolism and acts as a derepressor of another central regulator PHO5. Binds to the upstream activator sequence (UAS) of PHO5. It also binds to the TRP4, HIS4, and CYC1 promoters. The sequence is that of Regulatory protein PHO2 (PHO2) from Saccharomyces cerevisiae (strain ATCC 204508 / S288c) (Baker's yeast).